The chain runs to 410 residues: Single Ig IL-1-related receptor (410 aa).

The Extracellular portion of the chain corresponds to 1-118 (MPGVCDRAPD…TLQRAGPTSH (118 aa)). One can recognise an Ig-like C2-type domain in the interval 9–109 (PDFLSPSEDQ…IQNISFSSFT (101 aa)). N-linked (GlcNAc...) asparagine glycosylation is found at asparagine 31, asparagine 73, asparagine 86, and asparagine 102. A disulfide bridge connects residues cysteine 32 and cysteine 98. The chain crosses the membrane as a helical; Signal-anchor for type III membrane protein span at residues 119–139 (VAAVLASLLVLLALLLAALLY). Over 140–410 (VKCRLNVLLW…FYCLVSKDDM (271 aa)) the chain is Cytoplasmic. The region spanning 163-307 (KLYDAYVSYS…DFWKEVQLAL (145 aa)) is the TIR domain. The segment at 340–390 (EGRALDSEVDPDPEGDLGVRGPVFGEPSAPPHTSGVSLGESRSSEVDVSDL) is disordered. Serine 383 bears the Phosphoserine mark.

It belongs to the interleukin-1 receptor family. As to quaternary structure, interacts with IL1R1, IRAK1, TLR4, TLR5, TLR9 and TRAF6. Upon IL-1 stimulation found in a complex at least composed of IL1R1, SIGIRR, MYD88, IRAK1 and TRAF6. Upon stimulation with LPC found in a complex at least composed of TLR4, SIG1IR, MYD88, IRAK1 and TRAF6. Interacts with PALM3. Mainly expressed in epithelial tissues such as kidney, lung and gut.

It is found in the membrane. In terms of biological role, acts as a negative regulator of the Toll-like and IL-1R receptor signaling pathways. Attenuates the recruitment of receptor-proximal signaling components to the TLR4 receptor, probably through an TIR-TIR domain interaction with TLR4. Through its extracellular domain interferes with the heterodimerization of Il1R1 and IL1RAP. The sequence is that of Single Ig IL-1-related receptor (SIGIRR) from Homo sapiens (Human).